We begin with the raw amino-acid sequence, 179 residues long: ADP-ribosylation factor-like protein 5B (179 aa).

Gly2 carries N-myristoyl glycine lipidation. Residues 23–30 (GLDNAGKT), 66–70 (DIGGQ), 125–128 (NKQD), and Ala159 each bind GTP.

The protein belongs to the small GTPase superfamily. Arf family.

Binds and exchanges GTP and GDP. The chain is ADP-ribosylation factor-like protein 5B (Arl5b) from Mus musculus (Mouse).